Reading from the N-terminus, the 585-residue chain is 3-hydroxy-3-methylglutaryl-coenzyme A reductase 1 (585 aa).

The next 2 helical transmembrane spans lie at 38–58 and 77–97; these read LYLT…FLLC and EIVA…FFGI. The linker stretch occupies residues 98 to 169; that stretch reads DFVQSLVLRP…DEMPVTVMTE (72 aa). The interval 170–585 is catalytic; that stretch reads EDEEIIRSVV…SSKDVSKVSS (416 aa). Glu264 functions as the Charge relay system in the catalytic mechanism. Asn328 carries an N-linked (GlcNAc...) asparagine glycan. Residue Lys396 is the Charge relay system of the active site. Asn441 carries N-linked (GlcNAc...) asparagine glycosylation. The active-site Charge relay system is the Asp472. The Proton donor role is filled by His570. N-linked (GlcNAc...) asparagine glycosylation is present at Asn574.

It belongs to the HMG-CoA reductase family.

It localises to the endoplasmic reticulum membrane. The protein localises to the mitochondrion membrane. The protein resides in the plastid membrane. The catalysed reaction is (R)-mevalonate + 2 NADP(+) + CoA = (3S)-3-hydroxy-3-methylglutaryl-CoA + 2 NADPH + 2 H(+). The protein operates within metabolic intermediate biosynthesis; (R)-mevalonate biosynthesis; (R)-mevalonate from acetyl-CoA: step 3/3. In terms of biological role, catalyzes the synthesis of mevalonate. The specific precursor of all isoprenoid compounds present in plants. The polypeptide is 3-hydroxy-3-methylglutaryl-coenzyme A reductase 1 (HMG1) (Gossypium hirsutum (Upland cotton)).